The primary structure comprises 107 residues: Parvalbumin beta (107 aa).

The residue at position 1 (S1) is an N-acetylserine. 2 EF-hand domains span residues 37-72 (KSLD…FSPS) and 76-107 (LTDA…MIKA). Ca(2+) contacts are provided by D50, D52, S54, F56, E58, E61, D89, D91, D93, M95, and E100.

Belongs to the parvalbumin family.

In muscle, parvalbumin is thought to be involved in relaxation after contraction. It binds two calcium ions. The sequence is that of Parvalbumin beta from Esox lucius (Northern pike).